The sequence spans 906 residues: Ribonucleoside-diphosphate reductase large subunit-like protein (906 aa).

Disordered regions lie at residues 1–70 and 89–129; these read MNPA…AGNT and VSWR…LSTF. A compositionally biased stretch (polar residues) spans 98–109; sequence PDGTPSVLSLTR.

This sequence belongs to the ribonucleoside diphosphate reductase large chain family.

It is found in the virion. It localises to the host cytoplasm. In terms of biological role, does not possess a ribonucleotide reductase activity. Betaherpesviruses probably use another strategy to expand the dNTP pool in a quiescent host cell. The polypeptide is Ribonucleoside-diphosphate reductase large subunit-like protein (Homo sapiens (Human)).